The primary structure comprises 115 residues: Large ribosomal subunit protein bL20 (115 aa).

Belongs to the bacterial ribosomal protein bL20 family.

In terms of biological role, binds directly to 23S ribosomal RNA and is necessary for the in vitro assembly process of the 50S ribosomal subunit. It is not involved in the protein synthesizing functions of that subunit. This is Large ribosomal subunit protein bL20 from Parasynechococcus marenigrum (strain WH8102).